Reading from the N-terminus, the 369-residue chain is Serine/threonine-protein phosphatase PP2A-1 catalytic subunit (369 aa).

Residues 1-57 (MDTDLDVPMQDAVTEQLTPTVSEDMDLNNNSSDNNAEEFSVDDLKPGSSGIADHKSS) are disordered. Mn(2+)-binding residues include D117, H119, D145, and N177. H178 functions as the Proton donor in the catalytic mechanism. Mn(2+)-binding residues include H227 and H301. A disordered region spans residues 348–369 (QYDPSVRPGEPSVSRKTPDYFL). L369 carries the leucine methyl ester modification.

Belongs to the PPP phosphatase family. PP-2A subfamily. As to quaternary structure, inactivated in a complex with phosphatase methylesterase PPE1 (PP2Ai). Interacts with phosphatase 2A activator RRD2, which can reactivate PP2Ai by dissociating the catalytic subunit from the complex. Forms a ternary complex with RRD2-TAP42. Requires Mn(2+) as cofactor. Reversibly methyl esterified on Leu-369 by leucine carboxyl methyltransferase 1 (PPM1) and protein phosphatase methylesterase 1 (PPE1). Carboxyl methylation influences the affinity of the catalytic subunit for the different regulatory subunits, thereby modulating the PP2A holoenzyme's substrate specificity, enzyme activity and cellular localization.

The catalysed reaction is O-phospho-L-seryl-[protein] + H2O = L-seryl-[protein] + phosphate. It catalyses the reaction O-phospho-L-threonyl-[protein] + H2O = L-threonyl-[protein] + phosphate. Functionally, exact function not known, phosphatase 2A performs an essential cellular function. In Saccharomyces cerevisiae (strain ATCC 204508 / S288c) (Baker's yeast), this protein is Serine/threonine-protein phosphatase PP2A-1 catalytic subunit (PPH21).